Reading from the N-terminus, the 547-residue chain is Chaperonin GroEL (547 aa).

ATP-binding positions include 30-33 (TLGP), Lys-51, 87-91 (DGTTT), Gly-415, and Asp-496. Residues 525-547 (KPEPKSPAGGPGMGGMGGMDGMM) are disordered. Residues 533 to 547 (GGPGMGGMGGMDGMM) are compositionally biased toward gly residues.

Belongs to the chaperonin (HSP60) family. In terms of assembly, forms a cylinder of 14 subunits composed of two heptameric rings stacked back-to-back. Interacts with the co-chaperonin GroES.

The protein resides in the cytoplasm. It carries out the reaction ATP + H2O + a folded polypeptide = ADP + phosphate + an unfolded polypeptide.. Its function is as follows. Together with its co-chaperonin GroES, plays an essential role in assisting protein folding. The GroEL-GroES system forms a nano-cage that allows encapsulation of the non-native substrate proteins and provides a physical environment optimized to promote and accelerate protein folding. This Cereibacter sphaeroides (strain ATCC 17029 / ATH 2.4.9) (Rhodobacter sphaeroides) protein is Chaperonin GroEL.